We begin with the raw amino-acid sequence, 304 residues long: Nucleotide-binding protein ROP_69550 (304 aa).

An ATP-binding site is contributed by 24–31 (GLSGAGLQ). 75–78 (DVRS) serves as a coordination point for GTP.

This sequence belongs to the RapZ-like family.

Displays ATPase and GTPase activities. The protein is Nucleotide-binding protein ROP_69550 of Rhodococcus opacus (strain B4).